Consider the following 458-residue polypeptide: Bifunctional protein GlmU (458 aa).

The tract at residues 1–224 (MTVIALAAGK…PKVAVGVNNQ (224 aa)) is pyrophosphorylase. Residues 6-9 (LAAG), K20, Q71, and 76-77 (GT) each bind UDP-N-acetyl-alpha-D-glucosamine. Position 99 (D99) interacts with Mg(2+). Residues G136, E150, N165, and N222 each contribute to the UDP-N-acetyl-alpha-D-glucosamine site. N222 is a Mg(2+) binding site. The linker stretch occupies residues 225–245 (LELARATRLLFKRKALRLMED). The interval 246 to 458 (GVLMIDPRTV…TAETEEKEQV (213 aa)) is N-acetyltransferase. UDP-N-acetyl-alpha-D-glucosamine is bound by residues R328 and K346. The active-site Proton acceptor is H358. Y361 and N372 together coordinate UDP-N-acetyl-alpha-D-glucosamine. Residues 381–382 (NY), S401, S419, and R436 each bind acetyl-CoA.

The protein in the N-terminal section; belongs to the N-acetylglucosamine-1-phosphate uridyltransferase family. This sequence in the C-terminal section; belongs to the transferase hexapeptide repeat family. As to quaternary structure, homotrimer. Mg(2+) serves as cofactor.

The protein resides in the cytoplasm. The enzyme catalyses alpha-D-glucosamine 1-phosphate + acetyl-CoA = N-acetyl-alpha-D-glucosamine 1-phosphate + CoA + H(+). The catalysed reaction is N-acetyl-alpha-D-glucosamine 1-phosphate + UTP + H(+) = UDP-N-acetyl-alpha-D-glucosamine + diphosphate. It functions in the pathway nucleotide-sugar biosynthesis; UDP-N-acetyl-alpha-D-glucosamine biosynthesis; N-acetyl-alpha-D-glucosamine 1-phosphate from alpha-D-glucosamine 6-phosphate (route II): step 2/2. The protein operates within nucleotide-sugar biosynthesis; UDP-N-acetyl-alpha-D-glucosamine biosynthesis; UDP-N-acetyl-alpha-D-glucosamine from N-acetyl-alpha-D-glucosamine 1-phosphate: step 1/1. It participates in bacterial outer membrane biogenesis; LPS lipid A biosynthesis. In terms of biological role, catalyzes the last two sequential reactions in the de novo biosynthetic pathway for UDP-N-acetylglucosamine (UDP-GlcNAc). The C-terminal domain catalyzes the transfer of acetyl group from acetyl coenzyme A to glucosamine-1-phosphate (GlcN-1-P) to produce N-acetylglucosamine-1-phosphate (GlcNAc-1-P), which is converted into UDP-GlcNAc by the transfer of uridine 5-monophosphate (from uridine 5-triphosphate), a reaction catalyzed by the N-terminal domain. The protein is Bifunctional protein GlmU of Bdellovibrio bacteriovorus (strain ATCC 15356 / DSM 50701 / NCIMB 9529 / HD100).